The following is a 346-amino-acid chain: 3-keto-steroid reductase (346 aa).

NADP(+) contacts are provided by L20, T43, and K49. Catalysis depends on proton donor residues S182 and Y205. 3 residues coordinate NADP(+): Y205, K209, and S241. K209 acts as the Lowers pKa of active site Tyr in catalysis.

Belongs to the short-chain dehydrogenases/reductases (SDR) family. ERG27 subfamily.

It carries out the reaction a 3beta-hydroxysteroid + NADP(+) = a 3-oxosteroid + NADPH + H(+). It functions in the pathway steroid biosynthesis; zymosterol biosynthesis; zymosterol from lanosterol: step 5/6. Its function is as follows. Responsible for the reduction of the keto group on the C-3 of sterols. The sequence is that of 3-keto-steroid reductase (ERG27) from Debaryomyces hansenii (strain ATCC 36239 / CBS 767 / BCRC 21394 / JCM 1990 / NBRC 0083 / IGC 2968) (Yeast).